The primary structure comprises 122 residues: MKKYNKSIGFYGEDLSVSFLEKEGYSILEKNFNCSSGEIDIIAIKDEIISFIEVKSRFSNSFGNPKESVTCSKQRRIINAAKYYLHIKKLYNYYIRFDVIEINFHIDSSKYELNFLKDAFRV.

It belongs to the UPF0102 family.

This Clostridium perfringens (strain 13 / Type A) protein is UPF0102 protein CPE1705.